The primary structure comprises 462 residues: MDTSGNPNGYYSAHLNPESDDLWSVLPKKYPGQLTEGILEEILEIESRLSRSKKNLKDAQKENRAFLVGVYPERSVGRHPSLSMEELKELCRTAEVHVVDTFIQRKNRLDPSTVLGKGKLEEIILKAIQKHVELLVFDLELTPSQAKKISDIADIKVIDRTQLILDIFARNAKSRDGKLQVELAQLKYLKGRLTELDDNMSRLTGGIGGRGPGETKLEIGKRRVEERITRLEVELKSLKKRREINRRQRKRNELPAVGIVGYTNAGKSTFLNALTNSEILSENKLFATLDPTTRRIRFPEEREIIISDTVGFIHDLPPELSNAFKATLEELGDSDLLVHVVDVSNPDYKLQMEAVEKILEELELSHIPMIQVFNKIDNLEKFKTWKIESDSNGYKTFSHPSINHGPGLEAIADLKEELGIDVHSDTVLVSAYQGWGLKAFLDLLEEKIYNLPRLNYSIAEKL.

The Hflx-type G domain maps to 255 to 452 (PAVGIVGYTN…LLEEKIYNLP (198 aa)). GTP is bound by residues 261–268 (GYTNAGKS), 286–290 (FATLD), 308–311 (DTVG), 374–377 (NKID), and 430–432 (SAY). Positions 268 and 288 each coordinate Mg(2+).

Belongs to the TRAFAC class OBG-HflX-like GTPase superfamily. HflX GTPase family. In terms of assembly, monomer. Associates with the 50S ribosomal subunit. Mg(2+) is required as a cofactor.

The protein resides in the cytoplasm. Its function is as follows. GTPase that associates with the 50S ribosomal subunit and may have a role during protein synthesis or ribosome biogenesis. The protein is GTPase HflX of Leptospira borgpetersenii serovar Hardjo-bovis (strain JB197).